Reading from the N-terminus, the 358-residue chain is tRNA-specific 2-thiouridylase MnmA (358 aa).

Residues 8–15 (GMSGGVDS) and methionine 34 contribute to the ATP site. Cysteine 103 (nucleophile) is an active-site residue. Cysteine 103 and cysteine 199 form a disulfide bridge. Residue glycine 127 coordinates ATP. The interval 149 to 151 (KDQ) is interaction with tRNA. Cysteine 199 acts as the Cysteine persulfide intermediate in catalysis. Residues 305 to 306 (RY) form an interaction with tRNA region.

The protein belongs to the MnmA/TRMU family.

The protein resides in the cytoplasm. It carries out the reaction S-sulfanyl-L-cysteinyl-[protein] + uridine(34) in tRNA + AH2 + ATP = 2-thiouridine(34) in tRNA + L-cysteinyl-[protein] + A + AMP + diphosphate + H(+). In terms of biological role, catalyzes the 2-thiolation of uridine at the wobble position (U34) of tRNA, leading to the formation of s(2)U34. The polypeptide is tRNA-specific 2-thiouridylase MnmA (Clostridium beijerinckii (strain ATCC 51743 / NCIMB 8052) (Clostridium acetobutylicum)).